Here is a 257-residue protein sequence, read N- to C-terminus: Ribonuclease HII (257 aa).

The RNase H type-2 domain occupies Thr-72–Lys-257. Residues Asp-78, Glu-79, and Asp-170 each coordinate a divalent metal cation.

Belongs to the RNase HII family. Mn(2+) is required as a cofactor. It depends on Mg(2+) as a cofactor.

The protein localises to the cytoplasm. The enzyme catalyses Endonucleolytic cleavage to 5'-phosphomonoester.. Functionally, endonuclease that specifically degrades the RNA of RNA-DNA hybrids. The protein is Ribonuclease HII of Bacillus thuringiensis (strain Al Hakam).